The chain runs to 114 residues: Seed trypsin/chymotrypsin inhibitor TI5-72 (114 aa).

Residues 1 to 28 (MELMNKKVMMKLALMVFLLSFAANVVNA) form the signal peptide. Positions 29-42 (RFDSTSFITQVLSN) are excised as a propeptide. Disulfide bonds link cysteine 50–cysteine 103, cysteine 51–cysteine 66, cysteine 54–cysteine 99, cysteine 56–cysteine 64, cysteine 73–cysteine 80, cysteine 77–cysteine 92, and cysteine 82–cysteine 90.

The protein belongs to the Bowman-Birk serine protease inhibitor family. As to expression, seed.

Functionally, inhibitor of trypsin and of chymotrypsin. May function as a natural phytochemical defense against predators. The chain is Seed trypsin/chymotrypsin inhibitor TI5-72 (TI572) from Pisum sativum (Garden pea).